Reading from the N-terminus, the 124-residue chain is NADH dehydrogenase [ubiquinone] iron-sulfur protein 6, mitochondrial (124 aa).

The N-terminal 28 residues, 1 to 28, are a transit peptide targeting the mitochondrion; that stretch reads MAAAMTFCRLLNRCGEAARSLPLGARCF. N6-acetyllysine is present on Lys-98.

This sequence belongs to the complex I NDUFS6 subunit family. As to quaternary structure, mammalian complex I is composed of 45 different subunits. This is a component of the iron-sulfur (IP) fragment of the enzyme.

The protein resides in the mitochondrion inner membrane. Accessory subunit of the mitochondrial membrane respiratory chain NADH dehydrogenase (Complex I), that is believed not to be involved in catalysis. Complex I functions in the transfer of electrons from NADH to the respiratory chain. The immediate electron acceptor for the enzyme is believed to be ubiquinone. This is NADH dehydrogenase [ubiquinone] iron-sulfur protein 6, mitochondrial (NDUFS6) from Gorilla gorilla gorilla (Western lowland gorilla).